Reading from the N-terminus, the 132-residue chain is Interleukin-13 (132 aa).

The signal sequence occupies residues 1–18 (MALLLTTVIALTCLGGFA). N-linked (GlcNAc...) asparagine glycosylation is found at N38, N49, N57, and N72. Intrachain disulfides connect C48-C76 and C64-C90.

This sequence belongs to the IL-4/IL-13 family. In terms of assembly, interacts with IL13RA2.

It is found in the secreted. Functionally, cytokine that plays important roles in allergic inflammation and immune response to parasite infection. Synergizes with IL2 in regulating interferon-gamma synthesis. Stimulates B-cell proliferation, and activation of eosinophils, basophils, and mast cells. Plays an important role in controlling IL33 activity by modulating the production of transmembrane and soluble forms of interleukin-1 receptor-like 1/IL1RL1. Displays the capacity to antagonize Th1-driven proinflammatory immune response and downregulates synthesis of many proinflammatory cytokines including IL1, IL6, IL10, IL12 and TNF-alpha through a mechanism that partially involves suppression of NF-kappa-B. Also functions on nonhematopoietic cells, including endothelial cells where it induces vascular cell adhesion protein 1/VCAM1, which is important in the recruitment of eosinophils. Exerts its biological effects through its receptors which comprises the IL4R chain and the IL13RA1 chain, to activate JAK1 and TYK2, leading to the activation of STAT6. Aside from IL13RA1, another receptor IL13RA2 acts as a high affinity decoy for IL13 and mediates internalization and depletion of extracellular IL13. This chain is Interleukin-13 (IL13), found in Macaca mulatta (Rhesus macaque).